Here is a 509-residue protein sequence, read N- to C-terminus: Tyrosine-protein kinase Lck (509 aa).

The N-myristoyl glycine moiety is linked to residue Gly-2. Residues 2-72 (GCGCSSHPED…DNLVIALHSY (71 aa)) form an interactions with CD4 and CD8 region. Residues Cys-3 and Cys-5 are each lipidated (S-palmitoyl cysteine). The SH3 domain occupies 61–121 (LQDNLVIALH…PFNFVAKANS (61 aa)). A Glycyl lysine isopeptide (Lys-Gly) (interchain with G-Cter in ubiquitin) cross-link involves residue Lys-99. Ser-102 carries the phosphoserine modification. An SH2 domain is found at 127 to 224 (WFFKNLSRKD…GLCTRLSRPC (98 aa)). The tract at residues 154–242 (RESESTAGSF…WWEDEWEVPR (89 aa)) is interaction with PTPRH. Thr-159 carries the post-translational modification Phosphothreonine. Ser-162 carries the post-translational modification Phosphoserine. The residue at position 192 (Tyr-192) is a Phosphotyrosine. A Phosphoserine modification is found at Ser-194. The 254-residue stretch at 245-498 (LKLVERLGAG…YLRSVLEDFF (254 aa)) folds into the Protein kinase domain. ATP contacts are provided by residues 251–259 (LGAGQFGEV) and Lys-273. Residue Lys-276 forms a Glycyl lysine isopeptide (Lys-Gly) (interchain with G-Cter in ubiquitin) linkage. Asp-364 functions as the Proton acceptor in the catalytic mechanism. Position 394 is a phosphotyrosine; by autocatalysis (Tyr-394). The residue at position 505 (Tyr-505) is a Phosphotyrosine; by CSK.

It belongs to the protein kinase superfamily. Tyr protein kinase family. SRC subfamily. In terms of assembly, binds to the cytoplasmic domain of cell surface receptors, such as AXL, CD2, CD4, CD5, CD8, CD44, CD45 and CD122. Also binds to effector molecules, such as PI4K, VAV1, RASA1, FYB1 and to other protein kinases including CDK1, RAF1, ZAP70 and SYK. Binds to phosphatidylinositol 3'-kinase (PI3K) from T-lymphocytes through its SH3 domain and to the tyrosine phosphorylated form of KHDRBS1/p70 through its SH2 domain. Interacts with SQSTM1. Interacts with phosphorylated LIME1. LIME1. Interacts with CBLB and PTPRH. Interacts with RUNX3. Forms a signaling complex with EPHA1, PTK2B and PI3-KINASE; upon activation by EFNA1 which may regulate T-lymphocytes migration. Associates with ZAP70 and RHOH; these interactions allow LCK-mediated RHOH and CD3 subunit phosphorylation in the presence of functional ZAP70. Interacts with CEACAM1 (via cytoplasmic domain); mediates CEACAM1 phosphorylation resulting in PTPN6 recruitment that dephosphorylates TCR stimulation-induced CD247 and ZAP70. Interacts with CD160. Interacts with CD48. Autophosphorylated on Tyr-394, increasing enzymatic activity, this site is dephosphorylated by PTN22. Phosphorylated on Tyr-505 by CSK, decreasing activity. Dephosphorylated by PTPRC/CD45. Dephosphorylation at Tyr-394 by PTPN2 negatively regulates T-cells differentiation. Dephosphorylation at Tyr-394 by DUSP22 negatively regulates T-cell receptor signaling. In terms of processing, myristoylation is required prior to palmitoylation. Post-translationally, palmitoylation regulates association with the plasma membrane and could be mediated by ZDHHC2. 'Lys-63'-linked ubiquitinated at Lys-99 and Lys-276 by UBR2; this modification is required for autophosphorylation at Tyr-394.

It is found in the cell membrane. Its subcellular location is the cytoplasm. It localises to the cytosol. It catalyses the reaction L-tyrosyl-[protein] + ATP = O-phospho-L-tyrosyl-[protein] + ADP + H(+). With respect to regulation, the relative activities of the inhibitory tyrosine-protein kinase CSK and the activating tyrosine-protein phosphatase PTPRC/CD45 determine the level of LCK activity. These interactions allow rapid and efficient activation of LCK in response to TCR stimulation. In terms of biological role, non-receptor tyrosine-protein kinase that plays an essential role in the selection and maturation of developing T-cells in the thymus and in the function of mature T-cells. Plays a key role in T-cell antigen receptor (TCR)-linked signal transduction pathways. Constitutively associated with the cytoplasmic portions of the CD4 and CD8 surface receptors. Association of the TCR with a peptide antigen-bound MHC complex facilitates the interaction of CD4 and CD8 with MHC class II and class I molecules, respectively, thereby recruiting the associated LCK protein to the vicinity of the TCR/CD3 complex. LCK then phosphorylates tyrosine residues within the immunoreceptor tyrosine-based activation motifs (ITAM) of the cytoplasmic tails of the TCR-gamma chains and CD3 subunits, initiating the TCR/CD3 signaling pathway. Once stimulated, the TCR recruits the tyrosine kinase ZAP70, that becomes phosphorylated and activated by LCK. Following this, a large number of signaling molecules are recruited, ultimately leading to lymphokine production. LCK also contributes to signaling by other receptor molecules. Associates directly with the cytoplasmic tail of CD2, which leads to hyperphosphorylation and activation of LCK. Also plays a role in the IL2 receptor-linked signaling pathway that controls the T-cell proliferative response. Binding of IL2 to its receptor results in increased activity of LCK. Is expressed at all stages of thymocyte development and is required for the regulation of maturation events that are governed by both pre-TCR and mature alpha beta TCR. Phosphorylates other substrates including RUNX3, PTK2B/PYK2, the microtubule-associated protein MAPT, RHOH or TYROBP. Interacts with UNC119; this interaction plays a crucial role in activation of LCK. The protein is Tyrosine-protein kinase Lck (LCK) of Aotus nancymaae (Ma's night monkey).